A 401-amino-acid chain; its full sequence is NADH-quinone oxidoreductase subunit D 2 (401 aa).

Belongs to the complex I 49 kDa subunit family. In terms of assembly, NDH-1 is composed of 14 different subunits. Subunits NuoB, C, D, E, F, and G constitute the peripheral sector of the complex.

It is found in the cell inner membrane. It catalyses the reaction a quinone + NADH + 5 H(+)(in) = a quinol + NAD(+) + 4 H(+)(out). NDH-1 shuttles electrons from NADH, via FMN and iron-sulfur (Fe-S) centers, to quinones in the respiratory chain. The immediate electron acceptor for the enzyme in this species is believed to be ubiquinone. Couples the redox reaction to proton translocation (for every two electrons transferred, four hydrogen ions are translocated across the cytoplasmic membrane), and thus conserves the redox energy in a proton gradient. The polypeptide is NADH-quinone oxidoreductase subunit D 2 (Koribacter versatilis (strain Ellin345)).